Reading from the N-terminus, the 428-residue chain is MDTLRALEPLHRACQVCNLWPWRLAPPPDSEGILLRRSRWLELYGWTVLIAATSFTVYGLFQESSVEEKQDSESTISSIGHTVDFIQLVGMRVAHLAALLEALWQRQAQRGFFAELGEIDRLLSKALRVDVEAMRINMRRQTSRRAVWILWGYAVSQLLILGAKLLSRGDRFPIYWISYLLPLLVCGLRYFQIFNATQLVRQRLDVLLVALQQLQLHQKGPAVDTVLEEQEDLEEAAMDRLIAVRLVYQRVWALVALLNRCYGLSMLMQVGNDFLAITSNCYWMFLNFRQSAASPFDILQIVASGVWSAPHLGNVLVLSLLCDRTAQCASRLALCLHQVSVDLRNESHNALVGTLVRYCAPLIILVPLQITQFSLQLLHQRLHFSAAGFFNVDCTLLYTIVGATTTYLIILIQFHMSESTIGSDSNGQ.

The Cytoplasmic segment spans residues 1-40 (MDTLRALEPLHRACQVCNLWPWRLAPPPDSEGILLRRSRW). Residues 41 to 61 (LELYGWTVLIAATSFTVYGLF) form a helical membrane-spanning segment. Residues 62–145 (QESSVEEKQD…INMRRQTSRR (84 aa)) lie on the Extracellular side of the membrane. Residues 146 to 166 (AVWILWGYAVSQLLILGAKLL) form a helical membrane-spanning segment. Residues 167 to 173 (SRGDRFP) are Cytoplasmic-facing. The helical transmembrane segment at 174–194 (IYWISYLLPLLVCGLRYFQIF) threads the bilayer. A glycan (N-linked (GlcNAc...) asparagine) is linked at N195. Residues 195–250 (NATQLVRQRLDVLLVALQQLQLHQKGPAVDTVLEEQEDLEEAAMDRLIAVRLVYQR) are Extracellular-facing. Residues 251-271 (VWALVALLNRCYGLSMLMQVG) traverse the membrane as a helical segment. Topologically, residues 272–300 (NDFLAITSNCYWMFLNFRQSAASPFDILQ) are cytoplasmic. Residues 301 to 321 (IVASGVWSAPHLGNVLVLSLL) form a helical membrane-spanning segment. Residues 322–349 (CDRTAQCASRLALCLHQVSVDLRNESHN) are Extracellular-facing. N345 carries N-linked (GlcNAc...) asparagine glycosylation. Residues 350 to 370 (ALVGTLVRYCAPLIILVPLQI) traverse the membrane as a helical segment. At 371-395 (TQFSLQLLHQRLHFSAAGFFNVDCT) the chain is on the cytoplasmic side. Residues 396 to 416 (LLYTIVGATTTYLIILIQFHM) traverse the membrane as a helical segment. The Extracellular segment spans residues 417-428 (SESTIGSDSNGQ).

The protein belongs to the insect chemoreceptor superfamily. Gustatory receptor (GR) family. Gr2a subfamily. As to expression, expressed in neurons of the terminal external chemosensory organ, the dorsal external chemosensory organ, as well as in the dorsal pharyngeal sense organ of larvae.

It localises to the cell membrane. Functionally, probable gustatory receptor which mediates acceptance or avoidance behavior, depending on its not yet determined substrates. The chain is Putative gustatory receptor 2a (Gr2a) from Drosophila melanogaster (Fruit fly).